Consider the following 341-residue polypeptide: MQYKKSLVASALVATSLAAYAPKDPWSTLTPSATYKGGITDYSSTFGIAVEPIATTASSKAKRAAAISQIGDGQIQATTKTTAAAVSQIGDGQIQATTKTKAAAVSQIGDGQIQATTKTTSAKTTAAAVSQIGDGQIQATTKTKAAAVSQIGDGQIQATTKTTAAAVSQIGDGQIQATTKTTAAAVSQIGDGQIQATTNTTVAPVSQITDGQIQATTLTSATIIPSPAPAPITNGTDPVTAETCKSSGTLEMNLKGGILTDGKGRIGSIVANRQFQFDGPPPQAGAIYAAGWSITPEGNLAIGDQDTFYQCLSGNFYNLYDEHIGTQCNAVHLQAIDLLNC.

Residues 1-18 (MQYKKSLVASALVATSLA) form the signal peptide. Positions 19–63 (AYAPKDPWSTLTPSATYKGGITDYSSTFGIAVEPIATTASSKAKR) are excised as a propeptide. 8 PIR1/2/3 repeats span residues 64-82 (AAAISQIGDGQIQATTKTT), 83-101 (AAAVSQIGDGQIQATTKTK), 102-125 (AAAVSQIGDGQIQATTKTTSAKTT), 126-144 (AAAVSQIGDGQIQATTKTK), 145-163 (AAAVSQIGDGQIQATTKTT), 164-182 (AAAVSQIGDGQIQATTKTT), 183-201 (AAAVSQIGDGQIQATTNTT), and 202-220 (VAPVSQITDGQIQATTLTS).

The protein belongs to the PIR protein family. Covalently linked to beta-1,3-glucan of the inner cell wall layer via an alkali-sensitive ester linkage between the gamma-carboxyl group of glutamic acids, arising from specific glutamines within the PIR1/2/3 repeats, and hydroxyl groups of glucoses of beta-1,3-glucan chains. Post-translationally, O-glycosylated. Extensively O-mannosylated.

The protein localises to the secreted. The protein resides in the cell wall. Functionally, component of the outer cell wall layer. Required for stability of the cell wall and for optimal growth. Required for resistance against several antifungal and cell wall-perturbing agents and for tolerance to heat shock. The sequence is that of Cell wall mannoprotein PIR1 (PIR1) from Saccharomyces cerevisiae (strain ATCC 204508 / S288c) (Baker's yeast).